A 211-amino-acid polypeptide reads, in one-letter code: Somatotropin (211 aa).

A signal peptide spans 1–23 (MASGFLLCPVLLAVFFMSPVEVG). His40 is a binding site for Zn(2+). A disulfide bond links Cys73 and Cys184. Zn(2+) is bound at residue Glu193. A disulfide bridge connects residues Cys201 and Cys209.

The protein belongs to the somatotropin/prolactin family.

The protein resides in the secreted. Growth hormone plays an important role in growth control and is involved in the regulation of several anabolic processes. Implicated as an osmoregulatory substance important for seawater adaptation. The chain is Somatotropin (gh) from Lepisosteus osseus (Long-nosed gar).